The primary structure comprises 365 residues: Endophilin-B1 (365 aa).

The residue at position 1 (methionine 1) is an N-acetylmethionine. The membrane-binding amphipathic helix stretch occupies residues 1 to 30 (MNIMDFNVKKLAADAGTFLSRAVQFTEEKL). Residues 1–37 (MNIMDFNVKKLAADAGTFLSRAVQFTEEKLGQAEKTE) are required for membrane binding. A BAR domain is found at 27-261 (EEKLGQAEKT…LGSFPSNYLS (235 aa)). Phosphothreonine; by CDK5 is present on threonine 145. The stretch at 155–186 (YKTIAKERKLLQNKRLDLDAAKTRLKKAKAAE) forms a coiled coil. The 61-residue stretch at 305–365 (SNNRKARVLY…VPITYLELLN (61 aa)) folds into the SH3 domain.

The protein belongs to the endophilin family. In terms of assembly, homodimer, and heterodimer with SH3GLB2. Binds BAX; induction of apoptosis augments BAX binding. Binds DNM1, HTT, AMPH, BIN1 and ARFGAP1. Interacts with UVRAG; UVRAG bridges the interaction to BECN1 indicative for an association with the PI3K complex II (PI3KC3-C2). Isoform 3 interacts with PPP1CC; this interaction leads to the inhibition of phosphatase activity. Phosphorylated at Thr-145 by CDK5; this phosphorylation is required for autophagy induction in starved neurons and facilitates homodimerization. As to expression, isoform 1 is widely expressed. Isoform 2 is brain-specific. Isoform 3 is predominantly expressed in testis, but it is also detected in liver and, at much lower levels, in skin, stomach and ovary.

Its subcellular location is the cytoplasm. The protein localises to the golgi apparatus membrane. It is found in the mitochondrion outer membrane. It localises to the cytoplasmic vesicle. The protein resides in the autophagosome membrane. Its subcellular location is the midbody. Its function is as follows. May be required for normal outer mitochondrial membrane dynamics. Required for coatomer-mediated retrograde transport in certain cells. May recruit other proteins to membranes with high curvature. May promote membrane fusion. Involved in activation of caspase-dependent apoptosis by promoting BAX/BAK1 activation. Isoform 1 acts proapoptotic in fibroblasts. Involved in caspase-independent apoptosis during nutrition starvation and involved in the regulation of autophagy. Activates lipid kinase activity of PIK3C3 during autophagy probably by associating with the PI3K complex II (PI3KC3-C2). Associated with PI3KC3-C2 during autophagy may regulate the trafficking of ATG9A from the Golgi complex to the peripheral cytoplasm for the formation of autophagosomes by inducing Golgi membrane tubulation and fragmentation. Involved in regulation of degradative endocytic trafficking and cytokinesis, probably in the context of PI3KC3-C2. Isoform 2 acts antiapoptotic in neuronal cells; involved in maintenance of mitochondrial morphology and promotes neuronal viability. The polypeptide is Endophilin-B1 (Sh3glb1) (Mus musculus (Mouse)).